The chain runs to 368 residues: Phospho-N-acetylmuramoyl-pentapeptide-transferase (368 aa).

The next 9 helical transmembrane spans lie at 23–43 (YITF…LVFG), 72–92 (IPTM…LLWA), 94–114 (IAEP…AVGF), 139–159 (VALG…SVLL), 170–190 (ITVD…TAVS), 201–221 (GLAA…AYLT), 238–258 (AGEV…FLWF), 265–286 (VFMG…ALLI), and 345–365 (KIVI…LLTL).

Belongs to the glycosyltransferase 4 family. MraY subfamily. Mg(2+) serves as cofactor.

The protein resides in the cell inner membrane. It carries out the reaction UDP-N-acetyl-alpha-D-muramoyl-L-alanyl-gamma-D-glutamyl-meso-2,6-diaminopimeloyl-D-alanyl-D-alanine + di-trans,octa-cis-undecaprenyl phosphate = di-trans,octa-cis-undecaprenyl diphospho-N-acetyl-alpha-D-muramoyl-L-alanyl-D-glutamyl-meso-2,6-diaminopimeloyl-D-alanyl-D-alanine + UMP. It participates in cell wall biogenesis; peptidoglycan biosynthesis. Functionally, catalyzes the initial step of the lipid cycle reactions in the biosynthesis of the cell wall peptidoglycan: transfers peptidoglycan precursor phospho-MurNAc-pentapeptide from UDP-MurNAc-pentapeptide onto the lipid carrier undecaprenyl phosphate, yielding undecaprenyl-pyrophosphoryl-MurNAc-pentapeptide, known as lipid I. In Chloroherpeton thalassium (strain ATCC 35110 / GB-78), this protein is Phospho-N-acetylmuramoyl-pentapeptide-transferase.